Consider the following 263-residue polypeptide: Aquaporin-8 (263 aa).

The Cytoplasmic portion of the chain corresponds to 1 to 38 (MSGEQTPMCSMDLREIKGKETNMADSYHGMSWYEQYIQ). A helical membrane pass occupies residues 39-59 (PCVVELLGSALFIFIGCLSVI). Cysteine 55 carries the cysteine persulfide modification. Cysteine 55 is modified (cysteine sulfenic acid (-SOH)). At 60–86 (ENSPNTGLLQPALAHGLALGLIIATLG) the chain is on the extracellular side. Residues 87 to 107 (NISGGHFNPAVSLAVTLVGGL) traverse the membrane as a helical segment. Residues 94 to 96 (NPA) carry the NPA 1 motif. Residues 108–109 (KT) are Cytoplasmic-facing. A helical transmembrane segment spans residues 110-130 (MLLIPYWVSQLFGGMIGAALA). The Extracellular portion of the chain corresponds to 131–158 (KVVSPEERFWNASGAAFAIVQEQEQVAE). Asparagine 141 is a glycosylation site (N-linked (GlcNAc...) asparagine). A helical membrane pass occupies residues 159–179 (ALGVEIVMTMLLVLAVCMGAV). Over 180 to 185 (NEKTMG) the chain is Cytoplasmic. A helical transmembrane segment spans residues 186–206 (PLAPFSIGFSVIVDILAGGGI). The Extracellular portion of the chain corresponds to 207-230 (SGACMNPARAFGPAVMAGYWDFHW). The short motif at 212–214 (NPA) is the NPA 2 element. The chain crosses the membrane as a helical span at residues 231 to 251 (IYWLGPLLAGLFVGLLIRLFI). The Cytoplasmic portion of the chain corresponds to 252-263 (GDEKTRLILKSR).

This sequence belongs to the MIP/aquaporin (TC 1.A.8) family. N-glycosylated. In terms of processing, sulfenylation at Cys-55(C55-SOH) when hydrogen peroxide flows through the AQP8 channel, making it susceptible to hydrogen sulfide produced by CBS. Post-translationally, persulfidation at Cys-55 is required to gate AQP8 channel; under stress condition, hydrogen peroxide accumulates in the cell leading to CBS activation that produces hydrogen sulfide inducing persulfidation of oxidized Cys-55 (C55-SOH). Highly expressed in sperm, pancreas and liver. Expressed in hepatocytes, acinal cells of pancreas and salivary gland, and absorptive colonic epithelial cells. Expressed in the myoepithelium of submandibular and parotid glands. Expressed in pancreatic beta-cells. Expressed in testis but not in epididymis. Expressed in small intestine.

It is found in the cell membrane. Its subcellular location is the mitochondrion inner membrane. The protein resides in the apical cell membrane. It localises to the basolateral cell membrane. The protein localises to the smooth endoplasmic reticulum membrane. The enzyme catalyses H2O(in) = H2O(out). The catalysed reaction is NH4(+)(in) = NH4(+)(out). It catalyses the reaction H2O2(out) = H2O2(in). It carries out the reaction formamide(out) = formamide(in). The enzyme catalyses methylamine(out) = methylamine(in). Reversibly gated by a two-step sulfenylation-persulfidation process in cells undergoing diverse stresses. In terms of biological role, channel that allows the facilitated permeation of water and uncharged molecules, such as hydrogen peroxide and the neutral form of ammonia (NH3), through cellular membranes such as plasma membrane, inner mitochondrial membrane and endoplasmic reticulum membrane of several tissues. The transport of ammonia neutral form induces a parallel transport of proton, at alkaline pH when the concentration of ammonia is high. However, it is unclear whether the transport of proton takes place via the aquaporin or via an endogenous pathway. Also, may transport ammonia analogs such as formamide and methylamine, a transport favourited at basic pH due to the increase of unprotonated (neutral) form, which is expected to favor diffusion. Does not transport urea or glycerol. The water transport mechanism is mercury- and copper-sensitive and passive in response to osmotic driving forces. At the canicular plasma membrane, mediates the osmotic transport of water toward the bile canaliculus and facilitates the cAMP-induced bile canalicular water secretion, a process involved in bile formation. In addition, mediates the hydrogen peroxide release from hepatocyte mitochondria that modulates the SREBF2-mediated cholesterol synthesis and facilitates the mitochondrial ammonia uptake which is metabolized into urea, mainly under glucagon stimulation. In B cells, transports the CYBB-generated hydrogen peroxide from the external leaflet of the plasma membrane to the cytosol to promote B cell activation and differentiation for signal amplification. In the small intestine and colon system, mediates water transport through mitochondria and apical membrane of epithelial cells. May play an important role in the adaptive response of proximal tubule cells to acidosis possibly facilitating mitochondrial ammonia transport. The polypeptide is Aquaporin-8 (Rattus norvegicus (Rat)).